The chain runs to 201 residues: ATP-dependent Clp protease proteolytic subunit (201 aa).

Serine 101 functions as the Nucleophile in the catalytic mechanism. The active site involves histidine 126.

Belongs to the peptidase S14 family. In terms of assembly, fourteen ClpP subunits assemble into 2 heptameric rings which stack back to back to give a disk-like structure with a central cavity, resembling the structure of eukaryotic proteasomes.

It localises to the cytoplasm. It carries out the reaction Hydrolysis of proteins to small peptides in the presence of ATP and magnesium. alpha-casein is the usual test substrate. In the absence of ATP, only oligopeptides shorter than five residues are hydrolyzed (such as succinyl-Leu-Tyr-|-NHMec, and Leu-Tyr-Leu-|-Tyr-Trp, in which cleavage of the -Tyr-|-Leu- and -Tyr-|-Trp bonds also occurs).. In terms of biological role, cleaves peptides in various proteins in a process that requires ATP hydrolysis. Has a chymotrypsin-like activity. Plays a major role in the degradation of misfolded proteins. The polypeptide is ATP-dependent Clp protease proteolytic subunit (Francisella philomiragia subsp. philomiragia (strain ATCC 25017 / CCUG 19701 / FSC 153 / O#319-036)).